Reading from the N-terminus, the 363-residue chain is Anhydro-N-acetylmuramic acid kinase (363 aa).

Glycine 9–aspartate 16 provides a ligand contact to ATP.

The protein belongs to the anhydro-N-acetylmuramic acid kinase family.

The enzyme catalyses 1,6-anhydro-N-acetyl-beta-muramate + ATP + H2O = N-acetyl-D-muramate 6-phosphate + ADP + H(+). Its pathway is amino-sugar metabolism; 1,6-anhydro-N-acetylmuramate degradation. It participates in cell wall biogenesis; peptidoglycan recycling. In terms of biological role, catalyzes the specific phosphorylation of 1,6-anhydro-N-acetylmuramic acid (anhMurNAc) with the simultaneous cleavage of the 1,6-anhydro ring, generating MurNAc-6-P. Is required for the utilization of anhMurNAc either imported from the medium or derived from its own cell wall murein, and thus plays a role in cell wall recycling. The polypeptide is Anhydro-N-acetylmuramic acid kinase (Nitrosomonas europaea (strain ATCC 19718 / CIP 103999 / KCTC 2705 / NBRC 14298)).